Reading from the N-terminus, the 439-residue chain is U1 small nuclear ribonucleoprotein 70 kDa (439 aa).

At Thr-2 the chain carries N-acetylthreonine. Residues 48-79 form a disordered region; that stretch reads FEDPRDAPPPTRAETREERMERKRREKIERRQ. Positions 60 to 79 are enriched in basic and acidic residues; the sequence is AETREERMERKRREKIERRQ. Residues 92–202 are required for interaction with U1 RNA; the sequence is HNDPNAQGDA…GGGLGGTRRG (111 aa). Residues 103–181 form the RRM domain; that stretch reads KTLFVARVNY…RRVLVDVERG (79 aa). Residue Lys-118 is modified to N6-acetyllysine. Tyr-126 is modified (phosphotyrosine). The interval 187-439 is disordered; sequence WRPRRLGGGL…NGYLMEAAPE (253 aa). Gly residues predominate over residues 192–201; the sequence is LGGGLGGTRR. A compositionally biased stretch (basic and acidic residues) spans 207 to 254; it reads NIRHSGRDDTSRYDERPGPSPLPHRDRDRDRERERRERSRERDKERER. 2 positions are modified to phosphoserine: Ser-226 and Ser-268. Basic residues predominate over residues 255-268; that stretch reads RRSRSRDRRRRSRS. Composition is skewed to basic and acidic residues over residues 269 to 286 and 294 to 310; these read RDKE…DKDR and RSRE…EELR. Ser-323 bears the Phosphoserine mark. The segment covering 346-394 has biased composition (basic and acidic residues); it reads PEEKGRDRDRDRRRSHRSERERRRDRDRDRDREHKRGERGGDRGRDEAR. Lys-349 participates in a covalent cross-link: Glycyl lysine isopeptide (Lys-Gly) (interchain with G-Cter in SUMO2). The segment covering 395–410 has biased composition (gly residues); sequence GGGGGGQDNGLEGLGN.

As to quaternary structure, component of the U1 snRNP. The U1 snRNP is composed of the U1 snRNA and the 7 core Sm proteins SNRPB, SNRPD1, SNRPD2, SNRPD3, SNRPE, SNRPF and SNRPG that assemble in a heptameric protein ring on the Sm site of the small nuclear RNA to form the core snRNP, and at least three U1 snRNP-specific proteins SNRNP70/U1-70K, SNRPA/U1-A and SNRPC/U1-C. Interacts with SCNM1. Found in a pre-mRNA splicing complex with SFRS4, SFRS5, SNRNP70, SNRPA1, SRRM1 and SRRM2. Found in a pre-mRNA exonic splicing enhancer (ESE) complex with SNRNP70, SNRPA1, SRRM1 and TRA2B/SFRS10. Interacts with dephosphorylated SFRS13A and SFPQ. Interacts with NUDT21/CPSF5, CPSF6, SCAF11, and ZRANB2. Interacts with GEMIN5. Interacts with FUS. Extensively phosphorylated on serine residues in the C-terminal region.

Its subcellular location is the nucleus speckle. The protein localises to the nucleus. It localises to the nucleoplasm. Component of the spliceosomal U1 snRNP, which is essential for recognition of the pre-mRNA 5' splice-site and the subsequent assembly of the spliceosome. SNRNP70 binds to the loop I region of U1-snRNA. This is U1 small nuclear ribonucleoprotein 70 kDa (SNRNP70) from Bos taurus (Bovine).